A 442-amino-acid chain; its full sequence is 3-dehydroquinate synthase, chloroplastic (442 aa).

The N-terminal 58 residues, 1 to 58 (MAANTISLSNVAASKNLNSFQSRAFIAPPTIFFPVASAKSKPGELSLSSTTLSRSRVR), are a transit peptide targeting the chloroplast. Position 59 is an N-acetylalanine (Ala-59). NAD(+)-binding positions include Asn-119, 150-152 (DGE), Lys-155, 183-188 (GGVIGD), 208-209 (TT), Lys-221, Lys-230, and 248-251 (TLNT). Position 263 (Glu-263) interacts with a divalent metal cation. Lys-305 is an NAD(+) binding site. Positions 326 and 343 each coordinate a divalent metal cation.

It belongs to the sugar phosphate cyclases superfamily. Dehydroquinate synthase family. In terms of assembly, homodimer. It depends on a divalent metal cation as a cofactor. The cofactor is NAD(+).

It is found in the plastid. The protein localises to the chloroplast. It carries out the reaction 7-phospho-2-dehydro-3-deoxy-D-arabino-heptonate = 3-dehydroquinate + phosphate. It functions in the pathway metabolic intermediate biosynthesis; chorismate biosynthesis; chorismate from D-erythrose 4-phosphate and phosphoenolpyruvate: step 2/7. In terms of biological role, catalyzes the second step in the shikimate pathway. The sequence is that of 3-dehydroquinate synthase, chloroplastic (DHQS) from Arabidopsis thaliana (Mouse-ear cress).